A 33-amino-acid polypeptide reads, in one-letter code: Protamine-1B (33 aa).

The interval Pro1–Arg33 is disordered.

Testis.

The protein resides in the nucleus. Its subcellular location is the chromosome. Functionally, protamines substitute for histones in the chromatin of sperm during the haploid phase of spermatogenesis. They compact sperm DNA into a highly condensed, stable and inactive complex. This is Protamine-1B from Oncorhynchus mykiss (Rainbow trout).